We begin with the raw amino-acid sequence, 368 residues long: Phospho-N-acetylmuramoyl-pentapeptide-transferase (368 aa).

10 helical membrane passes run 32-52 (TGGAVVTGALFVFLFGPWIID), 79-99 (TPTMGGLMILSGLVVSTVLWA), 102-122 (LNPYVWIVLAVTLGFGLIGFY), 142-160 (LLLELLIALAACYALTRLG), 176-196 (VALDLGWFFLGFGAFIIVGAG), 207-227 (GLAIVPVMIAAASFAMIAYLA), 244-264 (AGELAVLCGAVLGAGLGFLWF), 271-291 (IFMGDTGSLALGGMLGSIAVA), 296-316 (IVLAVIGGLFVLEAVSVIVQV), and 345-365 (QIVIRFWIISVMLALAGLSTL).

Belongs to the glycosyltransferase 4 family. MraY subfamily. It depends on Mg(2+) as a cofactor.

It localises to the cell inner membrane. The catalysed reaction is UDP-N-acetyl-alpha-D-muramoyl-L-alanyl-gamma-D-glutamyl-meso-2,6-diaminopimeloyl-D-alanyl-D-alanine + di-trans,octa-cis-undecaprenyl phosphate = di-trans,octa-cis-undecaprenyl diphospho-N-acetyl-alpha-D-muramoyl-L-alanyl-D-glutamyl-meso-2,6-diaminopimeloyl-D-alanyl-D-alanine + UMP. The protein operates within cell wall biogenesis; peptidoglycan biosynthesis. Its function is as follows. Catalyzes the initial step of the lipid cycle reactions in the biosynthesis of the cell wall peptidoglycan: transfers peptidoglycan precursor phospho-MurNAc-pentapeptide from UDP-MurNAc-pentapeptide onto the lipid carrier undecaprenyl phosphate, yielding undecaprenyl-pyrophosphoryl-MurNAc-pentapeptide, known as lipid I. This Nitrobacter winogradskyi (strain ATCC 25391 / DSM 10237 / CIP 104748 / NCIMB 11846 / Nb-255) protein is Phospho-N-acetylmuramoyl-pentapeptide-transferase.